We begin with the raw amino-acid sequence, 125 residues long: uncharacterized protein (125 aa).

The interval glutamate 36–glutamine 57 is disordered. A helical transmembrane segment spans residues isoleucine 92–isoleucine 112.

It is found in the membrane. This is an uncharacterized protein from Mycoplasma pneumoniae (strain ATCC 29342 / M129 / Subtype 1) (Mycoplasmoides pneumoniae).